A 222-amino-acid chain; its full sequence is UPF0502 protein Shewmr7_1629 (222 aa).

This sequence belongs to the UPF0502 family.

The protein is UPF0502 protein Shewmr7_1629 of Shewanella sp. (strain MR-7).